The sequence spans 2223 residues: MAESASPPSSSAAAPAAEPGVTTEQPGPRSPPSSPPGLEEPLDGADPHVPHPDLAPIAFFCLRQTTSPRNWCIKMVCNPWFECVSMLVILLNCVTLGMYQPCDDMDCLSDRCKILQVFDDFIFIFFAMEMVLKMVALGIFGKKCYLGDTWNRLDFFIVMAGMVEYSLDLQNINLSAIRTVRVLRPLKAINRVPSMRILVNLLLDTLPMLGNVLLLCFFVFFIFGIIGVQLWAGLLRNRCFLEENFTIQGDVALPPYYQPEEDDEMPFICSLSGDNGIMGCHEIPPLKEQGRECCLSKDDVYDFGAGRQDLNASGLCVNWNRYYNVCRTGSANPHKGAINFDNIGYAWIVIFQVITLEGWVEIMYYVMDAHSFYNFIYFILLIIVGSFFMINLCLVVIATQFSETKQREHRLMLEQRQRYLSSSTVASYAEPGDCYEEIFQYVCHILRKAKRRALGLYQALQSRRQALGPEAPAPAKPGPHAKEPRHYHGKTKGQGDEGRHLGSRHCQTLHGPASPGNDHSGRELCPQHSPLDATPHTLVQPIPATLASDPASCPCCQHEDGRRPSGLGSTDSGQEGSGSGSSAGGEDEADGDGARSSEDGASSELGKEEEEEEQADGAVWLCGDVWRETRAKLRGIVDSKYFNRGIMMAILVNTVSMGIEHHEQPEELTNILEICNVVFTSMFALEMILKLAAFGLFDYLRNPYNIFDSIIVIISIWEIVGQADGGLSVLRTFRLLRVLKLVRFMPALRRQLVVLMKTMDNVATFCMLLMLFIFIFSILGMHIFGCKFSLRTDTGDTVPDRKNFDSLLWAIVTVFQILTQEDWNVVLYNGMASTSPWASLYFVALMTFGNYVLFNLLVAILVEGFQAEGDANRSYSDEDQSSSNIEEFDKLQEGLDSSGDPKLCPIPMTPNGHLDPSLPLGGHLGPAGAAGPAPRLSLQPDPMLVALGSRKSSVMSLGRMSYDQRSLSSSRSSYYGPWGRSAAWASRRSSWNSLKHKPPSAEHESLLSAERGGGARVCEVAADEGPPRAAPLHTPHAHHIHHGPHLAHRHRHHRRTLSLDNRDSVDLAELVPAVGAHPRAAWRAAGPAPGHEDCNGRMPSIAKDVFTKMGDRGDRGEDEEEIDYTLCFRVRKMIDVYKPDWCEVREDWSVYLFSPENRFRVLCQTIIAHKLFDYVVLAFIFLNCITIALERPQIEAGSTERIFLTVSNYIFTAIFVGEMTLKVVSLGLYFGEQAYLRSSWNVLDGFLVFVSIIDIVVSLASAGGAKILGVLRVLRLLRTLRPLRVISRAPGLKLVVETLISSLKPIGNIVLICCAFFIIFGILGVQLFKGKFYHCLGVDTRNITNRSDCMAANYRWVHHKYNFDNLGQALMSLFVLASKDGWVNIMYNGLDAVAVDQQPVTNHNPWMLLYFISFLLIVSFFVLNMFVGVVVENFHKCRQHQEAEEARRREEKRLRRLEKKRRKAQRLPYYATYCHTRLLIHSMCTSHYLDIFITFIICLNVVTMSLEHYNQPTSLETALKYCNYMFTTVFVLEAVLKLVAFGLRRFFKDRWNQLDLAIVLLSVMGITLEEIEINAALPINPTIIRIMRVLRIARVLKLLKMATGMRALLDTVVQALPQVGNLGLLFMLLFFIYAALGVELFGKLVCNDENPCEGMSRHATFENFGMAFLTLFQVSTGDNWNGIMKDTLRDCTHDERSCLSSLQFVSPLYFVSFVLTAQFVLINVVVAVLMKHLDDSNKEAQEDAEMDAELELEMAHGLGPGPRLPTGSPGAPGRGPGGAGGGGDTEGGLCRRCYSPAQENLWLDSVSLIIKDSLEGELTIIDNLSGSIFHHYSSPAGCKKCHHDKQEVQLAETEAFSLNSDRSSSILLGDDLSLEDPTACPPGRKDSKGELDPPEPMRVGDLGECFFPLSSTAVSPDPENFLCEMEEIPFNPVRSWLKHDSSQAPPSPFSPDASSPLLPMPAEFFHPAVSASQKGPEKGTGTGTLPKIALQGSWASLRSPRVNCTLLRQATGSDTSLDASPSSSAGSLQTTLEDSLTLSDSPRRALGPPAPAPGPRAGLSPAARRRLSLRGRGLFSLRGLRAHQRSHSSGGSTSPGCTHHDSMDPSDEEGRGGAGGGGAGSEHSETLSSLSLTSLFCPPPPPPAPGLTPARKFSSTSSLAAPGRPHAAALAHGLARSPSWAADRSKDPPGRAPLPMGLGPLAPPPQPLPGELEPGDAASKRKR.

Residues 1–19 (MAESASPPSSSAAAPAAEP) are compositionally biased toward low complexity. The segment at 1-46 (MAESASPPSSSAAAPAAEPGVTTEQPGPRSPPSSPPGLEEPLDGAD) is disordered. Residues 1–78 (MAESASPPSS…RNWCIKMVCN (78 aa)) lie on the Cytoplasmic side of the membrane. The I repeat unit spans residues 66–401 (TSPRNWCIKM…LCLVVIATQF (336 aa)). A helical membrane pass occupies residues 79-99 (PWFECVSMLVILLNCVTLGMY). The Extracellular portion of the chain corresponds to 100 to 120 (QPCDDMDCLSDRCKILQVFDD). The chain crosses the membrane as a helical span at residues 121 to 141 (FIFIFFAMEMVLKMVALGIFG). Residues 142 to 148 (KKCYLGD) are Cytoplasmic-facing. Residues 149–168 (TWNRLDFFIVMAGMVEYSLD) form a helical membrane-spanning segment. Over 169–173 (LQNIN) the chain is Extracellular. A glycan (N-linked (GlcNAc...) asparagine) is linked at asparagine 173. Residues 174 to 191 (LSAIRTVRVLRPLKAINR) form a helical membrane-spanning segment. Over 192 to 211 (VPSMRILVNLLLDTLPMLGN) the chain is Cytoplasmic. A helical membrane pass occupies residues 212–232 (VLLLCFFVFFIFGIIGVQLWA). Residues 233 to 377 (GLLRNRCFLE…DAHSFYNFIY (145 aa)) lie on the Extracellular side of the membrane. Asparagine 244 and asparagine 311 each carry an N-linked (GlcNAc...) asparagine glycan. A helical membrane pass occupies residues 378 to 398 (FILLIIVGSFFMINLCLVVIA). Residues 399–640 (TQFSETKQRE…AKLRGIVDSK (242 aa)) lie on the Cytoplasmic side of the membrane. Disordered stretches follow at residues 467–536 (LGPE…ATPH) and 555–616 (CCQH…EQAD). The II repeat unit spans residues 626 to 865 (WRETRAKLRG…LLVAILVEGF (240 aa)). The helical transmembrane segment at 641-661 (YFNRGIMMAILVNTVSMGIEH) threads the bilayer. Topologically, residues 662–676 (HEQPEELTNILEICN) are extracellular. Residues 677–697 (VVFTSMFALEMILKLAAFGLF) form a helical membrane-spanning segment. The Cytoplasmic segment spans residues 698–702 (DYLRN). A helical membrane pass occupies residues 703 to 721 (PYNIFDSIIVIISIWEIVG). Over 722–729 (QADGGLSV) the chain is Extracellular. A helical transmembrane segment spans residues 730–753 (LRTFRLLRVLKLVRFMPALRRQLV). The Cytoplasmic portion of the chain corresponds to 754-764 (VLMKTMDNVAT). Residues 765-785 (FCMLLMLFIFIFSILGMHIFG) form a helical membrane-spanning segment. Residues 786 to 841 (CKFSLRTDTGDTVPDRKNFDSLLWAIVTVFQILTQEDWNVVLYNGMASTSPWASLY) are Extracellular-facing. Residues 842 to 862 (FVALMTFGNYVLFNLLVAILV) form a helical membrane-spanning segment. Over 863–1166 (EGFQAEGDAN…NRFRVLCQTI (304 aa)) the chain is Cytoplasmic. Positions 899-936 (GDPKLCPIPMTPNGHLDPSLPLGGHLGPAGAAGPAPRL) are disordered. The segment covering 912–936 (GHLDPSLPLGGHLGPAGAAGPAPRL) has biased composition (low complexity). Serine 1058 is subject to Phosphoserine. The stretch at 1157–1434 (NRFRVLCQTI…MFVGVVVENF (278 aa)) is one III repeat. The chain crosses the membrane as a helical span at residues 1167–1187 (IAHKLFDYVVLAFIFLNCITI). The Extracellular segment spans residues 1188–1209 (ALERPQIEAGSTERIFLTVSNY). A helical membrane pass occupies residues 1210-1230 (IFTAIFVGEMTLKVVSLGLYF). Residues 1231–1244 (GEQAYLRSSWNVLD) lie on the Cytoplasmic side of the membrane. Residues 1245–1265 (GFLVFVSIIDIVVSLASAGGA) traverse the membrane as a helical segment. Residues 1266–1272 (KILGVLR) are Extracellular-facing. Residues 1273–1294 (VLRLLRTLRPLRVISRAPGLKL) form a helical membrane-spanning segment. At 1295 to 1304 (VVETLISSLK) the chain is on the cytoplasmic side. Residues 1305-1325 (PIGNIVLICCAFFIIFGILGV) form a helical membrane-spanning segment. Topologically, residues 1326-1410 (QLFKGKFYHC…TNHNPWMLLY (85 aa)) are extracellular. N-linked (GlcNAc...) asparagine glycosylation is found at asparagine 1342 and asparagine 1345. Residues 1411 to 1431 (FISFLLIVSFFVLNMFVGVVV) form a helical membrane-spanning segment. Residues 1432-1485 (ENFHKCRQHQEAEEARRREEKRLRRLEKKRRKAQRLPYYATYCHTRLLIHSMCT) lie on the Cytoplasmic side of the membrane. The stretch at 1472-1733 (TYCHTRLLIH…VVVAVLMKHL (262 aa)) is one IV repeat. The chain crosses the membrane as a helical span at residues 1486–1506 (SHYLDIFITFIICLNVVTMSL). Residues 1507–1522 (EHYNQPTSLETALKYC) are Extracellular-facing. Residues 1523-1543 (NYMFTTVFVLEAVLKLVAFGL) form a helical membrane-spanning segment. Topologically, residues 1544 to 1556 (RRFFKDRWNQLDL) are cytoplasmic. A helical transmembrane segment spans residues 1557-1577 (AIVLLSVMGITLEEIEINAAL). Topologically, residues 1578-1583 (PINPTI) are extracellular. A helical transmembrane segment spans residues 1584-1607 (IRIMRVLRIARVLKLLKMATGMRA). The Cytoplasmic segment spans residues 1608–1621 (LLDTVVQALPQVGN). A helical membrane pass occupies residues 1622–1642 (LGLLFMLLFFIYAALGVELFG). The Extracellular segment spans residues 1643-1709 (KLVCNDENPC…SSLQFVSPLY (67 aa)). A helical transmembrane segment spans residues 1710–1730 (FVSFVLTAQFVLINVVVAVLM). Over 1731–2223 (KHLDDSNKEA…PGDAASKRKR (493 aa)) the chain is Cytoplasmic. Disordered regions lie at residues 1758-1784 (LGPG…GGGD), 1868-1897 (LGDD…PEPM), 1937-1960 (LKHD…LLPM), 2013-2062 (SDTS…LSPA), and 2076-2223 (SLRG…KRKR). Positions 1770–1784 (GAPGRGPGGAGGGGD) are enriched in gly residues. Residues 2013 to 2028 (SDTSLDASPSSSAGSL) are compositionally biased toward low complexity. Composition is skewed to polar residues over residues 2029 to 2040 (QTTLEDSLTLSD) and 2087 to 2096 (HSSGGSTSPG). Basic and acidic residues predominate over residues 2098–2111 (THHDSMDPSDEEGR). Residues 2126 to 2136 (TLSSLSLTSLF) show a composition bias toward low complexity. Residues 2137 to 2146 (CPPPPPPAPG) are compositionally biased toward pro residues. The span at 2160-2176 (AAPGRPHAAALAHGLAR) shows a compositional bias: low complexity.

Belongs to the calcium channel alpha-1 subunit (TC 1.A.1.11) family. CACNA1I subfamily. As to quaternary structure, interacts with CATSPER1 and CATSPER2, leading to suppress T-type calcium channel activity. In response to raising of intracellular calcium, the T-type channels are activated by CaM-kinase II. As to expression, brain specific.

The protein localises to the membrane. It catalyses the reaction Ca(2+)(in) = Ca(2+)(out). In terms of biological role, voltage-sensitive calcium channels (VSCC) mediate the entry of calcium ions into excitable cells and are also involved in a variety of calcium-dependent processes, including muscle contraction, hormone or neurotransmitter release, gene expression, cell motility, cell division and cell death. This channel gives rise to T-type calcium currents. T-type calcium channels belong to the 'low-voltage activated (LVA)' group and are strongly blocked by nickel and mibefradil. A particularity of this type of channels is an opening at quite negative potentials, and a voltage-dependent inactivation. T-type channels serve pacemaking functions in both central neurons and cardiac nodal cells and support calcium signaling in secretory cells and vascular smooth muscle. They may also be involved in the modulation of firing patterns of neurons which is important for information processing as well as in cell growth processes. Gates in voltage ranges similar to, but higher than alpha 1G or alpha 1H. Voltage-sensitive calcium channels (VSCC) mediate the entry of calcium ions into excitable cells and are also involved in a variety of calcium-dependent processes, including muscle contraction, hormone or neurotransmitter release, gene expression, cell motility, cell division and cell death. This channel gives rise to T-type calcium currents. The sequence is that of Voltage-dependent T-type calcium channel subunit alpha-1I (CACNA1I) from Homo sapiens (Human).